Here is a 115-residue protein sequence, read N- to C-terminus: uncharacterized protein (115 aa).

A signal peptide spans 1-20; sequence MKTFFRTVLFGSLMAVCANS.

This is an uncharacterized protein from Escherichia coli O6:H1 (strain CFT073 / ATCC 700928 / UPEC).